The following is a 126-amino-acid chain: MQTTTQVKTPVVGKHVYGELYGVDEELLRDQEKLRKIVIEAAHIAKMHLVEVNSWKFKGGDKEGVSVIALVLESHIAIHTWPTYNYATVDVYTCGEHSDPMAAFRYIVSQLAPKRFTVNYSDRSYR.

Ser-74 (schiff-base intermediate with substrate; via pyruvic acid) is an active-site residue. Ser-74 is subject to Pyruvic acid (Ser); by autocatalysis. His-79 (proton acceptor; for processing activity) is an active-site residue. Residue Cys-94 is the Proton donor; for catalytic activity of the active site.

This sequence belongs to the prokaryotic AdoMetDC family. Type 1 subfamily. Heterooctamer of four alpha and four beta chains arranged as a tetramer of alpha/beta heterodimers. Requires pyruvate as cofactor. Post-translationally, is synthesized initially as an inactive proenzyme. Formation of the active enzyme involves a self-maturation process in which the active site pyruvoyl group is generated from an internal serine residue via an autocatalytic post-translational modification. Two non-identical subunits are generated from the proenzyme in this reaction, and the pyruvate is formed at the N-terminus of the alpha chain, which is derived from the carboxyl end of the proenzyme. The post-translation cleavage follows an unusual pathway, termed non-hydrolytic serinolysis, in which the side chain hydroxyl group of the serine supplies its oxygen atom to form the C-terminus of the beta chain, while the remainder of the serine residue undergoes an oxidative deamination to produce ammonia and the pyruvoyl group blocking the N-terminus of the alpha chain.

It catalyses the reaction L-arginine + H(+) = agmatine + CO2. It functions in the pathway amine and polyamine biosynthesis; agmatine biosynthesis; agmatine from L-arginine: step 1/1. Its function is as follows. Specifically catalyzes the decarboxylation of L-arginine to agmatine. Has no S-adenosylmethionine decarboxylase (AdoMetDC) activity. The chain is Arginine decarboxylase proenzyme from Pyrobaculum neutrophilum (strain DSM 2338 / JCM 9278 / NBRC 100436 / V24Sta) (Thermoproteus neutrophilus).